Here is a 294-residue protein sequence, read N- to C-terminus: MDCYLRRLKQELMSMKEVGDGLQDQMNCMMGALQELKLLQVQTALEQLEISGGGPAPGSPESPWTQLEPPQWEGSRGPVRPGACSPSNQASLGSTSSGKFPSHRSVCGRELATPPRTPLPEPQPSAQQGPELAEPDDWTSTLMSRGRNRQPLVLGDNVFADLVGNWLDLPELEKGGEKGETGEAGEPKGGRGQPRELGRRFALTANIFRKFLRSVRPDRDRLLKEKPGWVTPTASEPRAGRSQKVKKRSHSKGSGHCPFPGASEPRRGENASTGCPKALESSPSGFDINTAVWV.

Disordered regions lie at residues 50–143, 170–198, and 223–290; these read ISGG…STLM, PELE…RELG, and LKEK…DINT. Over residues 85 to 99 the composition is skewed to polar residues; that stretch reads SPSNQASLGSTSSGK. The inka box stretch occupies residues 134–177; sequence EPDDWTSTLMSRGRNRQPLVLGDNVFADLVGNWLDLPELEKGGE. Over residues 171–198 the composition is skewed to basic and acidic residues; sequence ELEKGGEKGETGEAGEPKGGRGQPRELG. Residues 241–253 show a composition bias toward basic residues; that stretch reads RSQKVKKRSHSKG.

Belongs to the INKA family. In terms of assembly, interacts with PAK4.

It localises to the nucleus. In terms of biological role, inhibitor of the serine/threonine-protein kinase PAK4. Acts by binding PAK4 in a substrate-like manner, inhibiting the protein kinase activity. This is PAK4-inhibitor INKA2 from Bos taurus (Bovine).